Reading from the N-terminus, the 513-residue chain is Calcium-dependent protein kinase 24 (513 aa).

A disordered region spans residues 1–33 (MQPDPSGSGGDGNANAKAKLAPPPVTAAGGRPV). The region spanning 47 to 305 (YRIGKKLGQG…AHEVLCHPWI (259 aa)) is the Protein kinase domain. Residues 53-61 (LGQGQFGTT) and lysine 76 contribute to the ATP site. The Proton acceptor role is filled by aspartate 171. Residues 311–341 (APDKPIDSAVLSRLKHFSAMNKLKKMALRVI) are autoinhibitory domain. EF-hand domains lie at 348–383 (EEIG…VGSE), 384–419 (LTEH…MNKL), 420–455 (EREE…FGLD), and 458–489 (HLED…GNAG). Ca(2+) contacts are provided by aspartate 361, aspartate 363, serine 365, threonine 367, glutamate 372, aspartate 397, aspartate 399, serine 401, threonine 403, glutamate 408, aspartate 433, aspartate 435, serine 437, glutamate 444, aspartate 467, asparagine 469, aspartate 471, glutamine 473, and glutamate 478.

This sequence belongs to the protein kinase superfamily. Ser/Thr protein kinase family. CDPK subfamily. Expressed in roots.

The protein resides in the cytoplasm. The catalysed reaction is L-seryl-[protein] + ATP = O-phospho-L-seryl-[protein] + ADP + H(+). The enzyme catalyses L-threonyl-[protein] + ATP = O-phospho-L-threonyl-[protein] + ADP + H(+). Activated by calcium. Autophosphorylation may play an important role in the regulation of the kinase activity. Its function is as follows. May play a role in signal transduction pathways that involve calcium as a second messenger. Possesses calcium-dependent protein kinase activity in vitro. The chain is Calcium-dependent protein kinase 24 from Oryza sativa subsp. japonica (Rice).